The primary structure comprises 132 residues: Vesicle transport protein GOT1A (132 aa).

The Cytoplasmic portion of the chain corresponds to 1–9 (MISITEWQK). Residues 10-30 (IGVGITGFGIFFILFGTLLYF) form a helical membrane-spanning segment. Position 31 (aspartate 31) is a topological domain, lumenal. A helical membrane pass occupies residues 32-52 (SVLLAFGNLLFLTGLSLIIGL). Residues 53-68 (RKTFWFFFQRHKLKGT) lie on the Cytoplasmic side of the membrane. A helical membrane pass occupies residues 69 to 89 (SFLLGGVVIVLLRWPLLGMFL). At 90–100 (ETYGFFSLFKG) the chain is on the lumenal side. The chain crosses the membrane as a helical span at residues 101–121 (FFPVAFGFLGNVCNIPFLGAL). Topologically, residues 122–132 (FRRLQGTSSMV) are cytoplasmic.

This sequence belongs to the GOT1 family.

The protein localises to the golgi apparatus membrane. Its function is as follows. May be involved in fusion of ER-derived transport vesicles with the Golgi complex. This chain is Vesicle transport protein GOT1A, found in Homo sapiens (Human).